We begin with the raw amino-acid sequence, 77 residues long: U18-lycotoxin-Ls1a (77 aa).

The signal sequence occupies residues 1–22; that stretch reads MSPKMQALLLLLGLITLLVVHA. Positions 23–34 are excised as a propeptide; that stretch reads EEELSENTESER. 4 disulfide bridges follow: Cys36/Cys51, Cys43/Cys56, Cys50/Cys67, and Cys58/Cys65.

The protein belongs to the neurotoxin 02 (plectoxin) family. As to expression, expressed by the venom gland.

Its subcellular location is the secreted. This is U18-lycotoxin-Ls1a from Lycosa singoriensis (Wolf spider).